The primary structure comprises 624 residues: Protein FAM234B (624 aa).

The interval 1–91 (MATVLSRALK…GFPSEPLGGL (91 aa)) is disordered. Residue Ser16 is modified to Phosphoserine. Position 26 is a phosphothreonine (Thr26). A phosphoserine mark is found at Ser30, Ser33, and Ser63. Residues 107–127 (VFLLTLVISMVLVLLCAFLIP) form a helical membrane-spanning segment.

It belongs to the FAM234 family.

The protein resides in the membrane. Its subcellular location is the golgi outpost. It localises to the cytoplasm. The protein localises to the cytoskeleton. It is found in the microtubule organizing center. In Mus musculus (Mouse), this protein is Protein FAM234B.